A 220-amino-acid polypeptide reads, in one-letter code: Protein Syd (220 aa).

It belongs to the Syd family.

It localises to the cell inner membrane. Functionally, interacts with the SecY protein in vivo. May bind preferentially to an uncomplexed state of SecY, thus functioning either as a chelating agent for excess SecY in the cell or as a regulatory factor that negatively controls the translocase function. The polypeptide is Protein Syd (Shewanella loihica (strain ATCC BAA-1088 / PV-4)).